The following is a 199-amino-acid chain: Golgi to ER traffic protein 1 (199 aa).

Topologically, residues 1–11 (MLLPDLHPYTI) are lumenal. A helical membrane pass occupies residues 12-31 (LLSIFLVLVVKQLVATIGKS). Residues 32–115 (TIQEFVWLVY…SIDKASNALI (84 aa)) lie on the Cytoplasmic side of the membrane. The stretch at 76–116 (YAKWTKLNRQADKLSAELQKLNQEIQQQKSSIDKASNALIL) forms a coiled coil. Residues 116–136 (LVLTTLPIWIARVFYRKTHLF) form a helical membrane-spanning segment. Residues 137–160 (YIRQGIFPKYVEWVLALPFLPNGA) lie on the Lumenal side of the membrane. The chain crosses the membrane as a helical span at residues 161–177 (VGLTIWMFAVNSVVSNF). Residues 178 to 199 (SFLVSFPFAKRVSKPVRDTKVE) lie on the Cytoplasmic side of the membrane.

It belongs to the WRB/GET1 family. As to quaternary structure, component of the Golgi to ER traffic (GET) complex, which is composed of GET1, GET2 and GET3. Within the complex, GET1 and GET2 form a heterotetramer which is stabilized by phosphatidylinositol binding and which binds to the GET3 homodimer.

It localises to the endoplasmic reticulum membrane. The protein localises to the golgi apparatus membrane. Functionally, required for the post-translational delivery of tail-anchored (TA) proteins to the endoplasmic reticulum. Together with GET2, acts as a membrane receptor for soluble GET3, which recognizes and selectively binds the transmembrane domain of TA proteins in the cytosol. The GET complex cooperates with the HDEL receptor ERD2 to mediate the ATP-dependent retrieval of resident ER proteins that contain a C-terminal H-D-E-L retention signal from the Golgi to the ER. This Candida albicans (strain WO-1) (Yeast) protein is Golgi to ER traffic protein 1.